A 1643-amino-acid chain; its full sequence is Neurexin-3 (1643 aa).

Positions 1-27 (MSSTLHSVFFTLKVSILLGSLLGLCLG) are cleaved as a signal peptide. In terms of domain architecture, Laminin G-like 1 spans 28–202 (LEFMGLPNQW…GVQMDAEGPC (175 aa)). The Extracellular segment spans residues 28-1568 (LEFMGLPNQW…EVIRESSSTT (1541 aa)). N58 and N105 each carry an N-linked (GlcNAc...) asparagine glycan. Residues 198–235 (AEGPCGERPCENGGICFLLDGHPTCDCSTTGYGGKLCS) form the EGF-like 1 domain. Disulfide bonds link C202–C213, C207–C222, and C224–C234. 2 Laminin G-like domains span residues 258-440 (VATF…VFKC) and 447-639 (DPIN…KSSC). D304, L321, and M374 together coordinate Ca(2+). 5 cysteine pairs are disulfide-bonded: C404/C440, C610/C639, C647/C658, C652/C667, and C669/C679. The region spanning 643 to 680 (SAKQCDSYPCKNNAVCKDGWNRFICDCTGTGYWGRTCE) is the EGF-like 2 domain. Laminin G-like domains follow at residues 685–857 (ILSY…IDYC) and 871–1046 (DPVT…ERGC). Ca(2+)-binding residues include D732 and L749. N757 is a glycosylation site (N-linked (GlcNAc...) asparagine). R807 provides a ligand contact to Ca(2+). 4 cysteine pairs are disulfide-bonded: C1018-C1046, C1053-C1064, C1058-C1073, and C1075-C1085. The EGF-like 3 domain maps to 1049 to 1086 (PSTTCQEDSCANQGVCMQQWEGFTCDCSMTSYSGNQCN). Positions 1090 to 1260 (ATYIFGKSGG…NPNIKINGSV (171 aa)) constitute a Laminin G-like 6 domain. Ca(2+)-binding residues include D1142 and I1159. N1189 carries an N-linked (GlcNAc...) asparagine glycan. Residues I1211 and N1213 each coordinate Ca(2+). N1257 and N1301 each carry an N-linked (GlcNAc...) asparagine glycan. Residues 1294–1318 (ATTTTRKNRSTASIQPTSDDLVSSA) form a disordered region. A compositionally biased stretch (polar residues) spans 1303-1318 (STASIQPTSDDLVSSA). An O-linked (Xyl...) (heparan sulfate) serine glycan is attached at S1317. A helical transmembrane segment spans residues 1569–1589 (GMVVGIVAAAALCILILLYAM). At 1590–1643 (YKYRNRDEGSYQVDETRNYISNSAQSNGTLMKEKQQSSKSGHKKQKNKDREYYV) the chain is on the cytoplasmic side. Residues 1611 to 1643 (NSAQSNGTLMKEKQQSSKSGHKKQKNKDREYYV) are disordered.

This sequence belongs to the neurexin family. As to quaternary structure, the laminin G-like domain 2 binds to NXPH1. Specific isoforms bind to alpha-dystroglycan. The cytoplasmic C-terminal region binds to CASK. Specific isoforms bind neuroligins NLGN1, NLGN2 and NLGN3. Interacts with CLSTN3. Post-translationally, O-glycosylated; contains heparan sulfate. Heparan sulfate attachment is required for synapse development by mediating interactions with neuroligins. Expressed in the blood vessel walls (at protein level). Highly expressed in brain, lung, and pancreas; a lower level of expression is detectable in heart, placenta, liver, and kidney, whereas no expression can be observed in skeletal muscle. Isoform 4a is heart-specific.

The protein resides in the presynaptic cell membrane. Functionally, neuronal cell surface protein that may be involved in cell recognition and cell adhesion. May mediate intracellular signaling. In Homo sapiens (Human), this protein is Neurexin-3 (NRXN3).